Consider the following 128-residue polypeptide: Large ribosomal subunit protein mL51 (128 aa).

The transit peptide at 1–31 (MAGSVPWAASRRLWGWVPSACRSFSLGVPRL) directs the protein to the mitochondrion.

It belongs to the mitochondrion-specific ribosomal protein mL51 family. Component of the mitochondrial ribosome large subunit (39S) which comprises a 16S rRNA and about 50 distinct proteins. Interacts with OXA1L.

It is found in the mitochondrion. The protein is Large ribosomal subunit protein mL51 (Mrpl51) of Mus musculus (Mouse).